The chain runs to 207 residues: Ion-translocating oxidoreductase complex subunit G (207 aa).

Residues 11–31 (GILLGFIALLCTIISAGIYFL) form a helical membrane-spanning segment. Thr-175 is subject to FMN phosphoryl threonine.

This sequence belongs to the RnfG family. The complex is composed of six subunits: RnfA, RnfB, RnfC, RnfD, RnfE and RnfG. FMN serves as cofactor.

Its subcellular location is the cell inner membrane. In terms of biological role, part of a membrane-bound complex that couples electron transfer with translocation of ions across the membrane. This chain is Ion-translocating oxidoreductase complex subunit G, found in Haemophilus influenzae (strain PittEE).